The following is a 205-amino-acid chain: Urease accessory protein UreG (205 aa).

Position 12–19 (12–19 (GPVGSGKT)) interacts with GTP.

The protein belongs to the SIMIBI class G3E GTPase family. UreG subfamily. Homodimer. UreD, UreF and UreG form a complex that acts as a GTP-hydrolysis-dependent molecular chaperone, activating the urease apoprotein by helping to assemble the nickel containing metallocenter of UreC. The UreE protein probably delivers the nickel.

It localises to the cytoplasm. In terms of biological role, facilitates the functional incorporation of the urease nickel metallocenter. This process requires GTP hydrolysis, probably effectuated by UreG. In Pseudomonas savastanoi pv. phaseolicola (strain 1448A / Race 6) (Pseudomonas syringae pv. phaseolicola (strain 1448A / Race 6)), this protein is Urease accessory protein UreG.